Reading from the N-terminus, the 676-residue chain is DNA ligase (676 aa).

NAD(+) contacts are provided by residues 35–39 (DAVYD), 84–85 (SL), and Glu115. Catalysis depends on Lys117, which acts as the N6-AMP-lysine intermediate. 4 residues coordinate NAD(+): Arg138, Glu177, Lys296, and Lys320. The Zn(2+) site is built by Cys414, Cys417, Cys432, and Cys437. A BRCT domain is found at 599-676 (NANLKLVGKT…SEAELLKILA (78 aa)).

Belongs to the NAD-dependent DNA ligase family. LigA subfamily. The cofactor is Mg(2+). Requires Mn(2+) as cofactor.

It catalyses the reaction NAD(+) + (deoxyribonucleotide)n-3'-hydroxyl + 5'-phospho-(deoxyribonucleotide)m = (deoxyribonucleotide)n+m + AMP + beta-nicotinamide D-nucleotide.. In terms of biological role, DNA ligase that catalyzes the formation of phosphodiester linkages between 5'-phosphoryl and 3'-hydroxyl groups in double-stranded DNA using NAD as a coenzyme and as the energy source for the reaction. It is essential for DNA replication and repair of damaged DNA. The polypeptide is DNA ligase (Trichormus variabilis (strain ATCC 29413 / PCC 7937) (Anabaena variabilis)).